Reading from the N-terminus, the 377-residue chain is Succinyl-diaminopimelate desuccinylase (377 aa).

Histidine 66 contributes to the Zn(2+) binding site. Aspartate 68 is a catalytic residue. Residue aspartate 99 participates in Zn(2+) binding. Glutamate 133 functions as the Proton acceptor in the catalytic mechanism. Residues glutamate 134, glutamate 162, and histidine 348 each contribute to the Zn(2+) site.

This sequence belongs to the peptidase M20A family. DapE subfamily. As to quaternary structure, homodimer. Zn(2+) serves as cofactor. The cofactor is Co(2+).

It carries out the reaction N-succinyl-(2S,6S)-2,6-diaminopimelate + H2O = (2S,6S)-2,6-diaminopimelate + succinate. The protein operates within amino-acid biosynthesis; L-lysine biosynthesis via DAP pathway; LL-2,6-diaminopimelate from (S)-tetrahydrodipicolinate (succinylase route): step 3/3. In terms of biological role, catalyzes the hydrolysis of N-succinyl-L,L-diaminopimelic acid (SDAP), forming succinate and LL-2,6-diaminopimelate (DAP), an intermediate involved in the bacterial biosynthesis of lysine and meso-diaminopimelic acid, an essential component of bacterial cell walls. The protein is Succinyl-diaminopimelate desuccinylase of Marinomonas sp. (strain MWYL1).